A 196-amino-acid polypeptide reads, in one-letter code: ATP-dependent Clp protease proteolytic subunit (196 aa).

Catalysis depends on Ser-99, which acts as the Nucleophile. His-124 is a catalytic residue.

The protein belongs to the peptidase S14 family. In terms of assembly, fourteen ClpP subunits assemble into 2 heptameric rings which stack back to back to give a disk-like structure with a central cavity, resembling the structure of eukaryotic proteasomes.

The protein resides in the cytoplasm. The catalysed reaction is Hydrolysis of proteins to small peptides in the presence of ATP and magnesium. alpha-casein is the usual test substrate. In the absence of ATP, only oligopeptides shorter than five residues are hydrolyzed (such as succinyl-Leu-Tyr-|-NHMec, and Leu-Tyr-Leu-|-Tyr-Trp, in which cleavage of the -Tyr-|-Leu- and -Tyr-|-Trp bonds also occurs).. Cleaves peptides in various proteins in a process that requires ATP hydrolysis. Has a chymotrypsin-like activity. Plays a major role in the degradation of misfolded proteins. The chain is ATP-dependent Clp protease proteolytic subunit from Nitratiruptor sp. (strain SB155-2).